The chain runs to 287 residues: Polyamine aminopropyltransferase (287 aa).

Residues 5–238 (EIWYETLHAN…GIMTFAWASN (234 aa)) enclose the PABS domain. Gln-33 is a binding site for S-methyl-5'-thioadenosine. Residues His-64 and Asp-88 each coordinate spermidine. Residues Glu-108 and 140–141 (DG) contribute to the S-methyl-5'-thioadenosine site. Catalysis depends on Asp-158, which acts as the Proton acceptor. A spermidine-binding site is contributed by 158 to 161 (DCTD). Pro-165 serves as a coordination point for S-methyl-5'-thioadenosine.

The protein belongs to the spermidine/spermine synthase family. As to quaternary structure, homodimer or homotetramer.

The protein resides in the cytoplasm. It catalyses the reaction S-adenosyl 3-(methylsulfanyl)propylamine + putrescine = S-methyl-5'-thioadenosine + spermidine + H(+). It functions in the pathway amine and polyamine biosynthesis; spermidine biosynthesis; spermidine from putrescine: step 1/1. Catalyzes the irreversible transfer of a propylamine group from the amino donor S-adenosylmethioninamine (decarboxy-AdoMet) to putrescine (1,4-diaminobutane) to yield spermidine. The polypeptide is Polyamine aminopropyltransferase (Pectobacterium atrosepticum (strain SCRI 1043 / ATCC BAA-672) (Erwinia carotovora subsp. atroseptica)).